A 145-amino-acid polypeptide reads, in one-letter code: Trafficking protein particle complex subunit 1 (145 aa).

It belongs to the TRAPP small subunits family. BET5 subfamily. As to quaternary structure, part of the multisubunit transport protein particle (TRAPP) complex. The heterodimer TRAPPC6B-TRAPPC3 interacts with TRAPPC1 likely providing a core for TRAPP complex formation.

Its subcellular location is the golgi apparatus. It localises to the cis-Golgi network. It is found in the endoplasmic reticulum. Functionally, may play a role in vesicular transport from endoplasmic reticulum to Golgi. This Bos taurus (Bovine) protein is Trafficking protein particle complex subunit 1 (TRAPPC1).